The chain runs to 95 residues: Acylphosphatase (95 aa).

Positions 5–93 (RAHVFIRGKV…GEFKDFKILP (89 aa)) constitute an Acylphosphatase-like domain. Catalysis depends on residues Arg20 and Asn38.

The protein belongs to the acylphosphatase family.

It catalyses the reaction an acyl phosphate + H2O = a carboxylate + phosphate + H(+). The protein is Acylphosphatase (acyP) of Pyrobaculum aerophilum (strain ATCC 51768 / DSM 7523 / JCM 9630 / CIP 104966 / NBRC 100827 / IM2).